Reading from the N-terminus, the 389-residue chain is ATP phosphoribosyltransferase regulatory subunit (389 aa).

Belongs to the class-II aminoacyl-tRNA synthetase family. HisZ subfamily. In terms of assembly, heteromultimer composed of HisG and HisZ subunits.

The protein resides in the cytoplasm. The protein operates within amino-acid biosynthesis; L-histidine biosynthesis; L-histidine from 5-phospho-alpha-D-ribose 1-diphosphate: step 1/9. Required for the first step of histidine biosynthesis. May allow the feedback regulation of ATP phosphoribosyltransferase activity by histidine. This chain is ATP phosphoribosyltransferase regulatory subunit, found in Moorella thermoacetica (strain ATCC 39073 / JCM 9320).